Here is a 276-residue protein sequence, read N- to C-terminus: 3-keto-5-aminohexanoate cleavage enzyme (276 aa).

Residue Glu-14 participates in (5S)-5-amino-3-oxohexanoate binding. Zn(2+) contacts are provided by His-46 and His-48. 4 residues coordinate (5S)-5-amino-3-oxohexanoate: Ser-82, Gly-85, Thr-106, and Asn-108. A Zn(2+)-binding site is contributed by Glu-230.

This sequence belongs to the BKACE family. Kce subfamily. In terms of assembly, homotetramer. The cofactor is Zn(2+).

It carries out the reaction (5S)-5-amino-3-oxohexanoate + acetyl-CoA = (3S)-3-aminobutanoyl-CoA + acetoacetate. The protein operates within amino-acid degradation; L-lysine degradation via acetate pathway. In terms of biological role, involved in the anaerobic fermentation of lysine. Catalyzes the reversible reaction between 3-keto-5-aminohexanoate (KAH) and acetyl-CoA to form 3-aminobutyryl-CoA and acetoacetate. The reaction involves the deprotonation of KAH, the nucleophilic addition onto acetyl-CoA and the intramolecular transfer of the CoA moiety. The protein is 3-keto-5-aminohexanoate cleavage enzyme of Cloacimonas acidaminovorans (strain Evry).